The sequence spans 257 residues: Transcription factor bHLH55 (257 aa).

In terms of domain architecture, bHLH spans 74 to 126 (NKRAKHKELERQRRQENTSLFKILRYLLPSQYIKGKRSSADHVLEAVNYIKDL).

Homodimer. In terms of tissue distribution, expressed in roots, leaves, stems, and flowers.

Its subcellular location is the nucleus. The protein is Transcription factor bHLH55 (BHLH55) of Arabidopsis thaliana (Mouse-ear cress).